The following is a 39-amino-acid chain: Photosystem II reaction center protein L (39 aa).

The helical transmembrane segment at 18–38 (SLYLGLLVVFTTGILFSSYFF) threads the bilayer.

The protein belongs to the PsbL family. As to quaternary structure, PSII is composed of 1 copy each of membrane proteins PsbA, PsbB, PsbC, PsbD, PsbE, PsbF, PsbH, PsbI, PsbJ, PsbK, PsbL, PsbM, PsbT, PsbX, PsbY, PsbZ, Psb30/Ycf12, peripheral proteins PsbO, CyanoQ (PsbQ), PsbU, PsbV and a large number of cofactors. It forms dimeric complexes.

The protein localises to the cellular thylakoid membrane. In terms of biological role, one of the components of the core complex of photosystem II (PSII). PSII is a light-driven water:plastoquinone oxidoreductase that uses light energy to abstract electrons from H(2)O, generating O(2) and a proton gradient subsequently used for ATP formation. It consists of a core antenna complex that captures photons, and an electron transfer chain that converts photonic excitation into a charge separation. This subunit is found at the monomer-monomer interface and is required for correct PSII assembly and/or dimerization. In Synechococcus sp. (strain WH7803), this protein is Photosystem II reaction center protein L.